We begin with the raw amino-acid sequence, 256 residues long: Thiazole synthase (256 aa).

Residue Lys96 is the Schiff-base intermediate with DXP of the active site. Residues Gly157, 183-184, and 205-206 each bind 1-deoxy-D-xylulose 5-phosphate; these read AG and NT.

Belongs to the ThiG family. As to quaternary structure, homotetramer. Forms heterodimers with either ThiH or ThiS.

The protein resides in the cytoplasm. The catalysed reaction is [ThiS sulfur-carrier protein]-C-terminal-Gly-aminoethanethioate + 2-iminoacetate + 1-deoxy-D-xylulose 5-phosphate = [ThiS sulfur-carrier protein]-C-terminal Gly-Gly + 2-[(2R,5Z)-2-carboxy-4-methylthiazol-5(2H)-ylidene]ethyl phosphate + 2 H2O + H(+). Its pathway is cofactor biosynthesis; thiamine diphosphate biosynthesis. Functionally, catalyzes the rearrangement of 1-deoxy-D-xylulose 5-phosphate (DXP) to produce the thiazole phosphate moiety of thiamine. Sulfur is provided by the thiocarboxylate moiety of the carrier protein ThiS. In vitro, sulfur can be provided by H(2)S. In Bacillus cereus (strain G9842), this protein is Thiazole synthase.